Consider the following 176-residue polypeptide: Cytochrome b (176 aa).

The next 3 membrane-spanning stretches (helical) occupy residues 33 to 53, 77 to 98, and 113 to 133; these read FGSL…FLAM, WVLR…YLHV, and WNMG…GYVL. Heme b contacts are provided by H83 and H97.

This sequence belongs to the cytochrome b family. In terms of assembly, the cytochrome bc1 complex contains 11 subunits: 3 respiratory subunits (MT-CYB, CYC1 and UQCRFS1), 2 core proteins (UQCRC1 and UQCRC2) and 6 low-molecular weight proteins (UQCRH/QCR6, UQCRB/QCR7, UQCRQ/QCR8, UQCR10/QCR9, UQCR11/QCR10 and a cleavage product of UQCRFS1). This cytochrome bc1 complex then forms a dimer. Heme b serves as cofactor.

Its subcellular location is the mitochondrion inner membrane. In terms of biological role, component of the ubiquinol-cytochrome c reductase complex (complex III or cytochrome b-c1 complex) that is part of the mitochondrial respiratory chain. The b-c1 complex mediates electron transfer from ubiquinol to cytochrome c. Contributes to the generation of a proton gradient across the mitochondrial membrane that is then used for ATP synthesis. This chain is Cytochrome b (MT-CYB), found in Nycticeius humeralis (Evening bat).